The chain runs to 1760 residues: Chitin synthase csmB (1760 aa).

The span at 1–17 shows a compositional bias: low complexity; the sequence is MSNRFSVYSSHSTGVSS. A disordered region spans residues 1-23; that stretch reads MSNRFSVYSSHSTGVSSARPSAP. The Myosin motor domain occupies 1–374; sequence MSNRFSVYSS…TVSITVVDIP (374 aa). Residue Asn-275 is glycosylated (N-linked (GlcNAc...) asparagine). A disordered region spans residues 344 to 363; that stretch reads LDNDPSTSGGSGPGGQWTDD. Pro-374 is a region of interest (actin-binding). 2 helical membrane-spanning segments follow: residues 731–751 and 767–787; these read IWVG…LRWI and LVLM…IIAF. Residues Asn-878, Asn-906, and Asn-995 are each glycosylated (N-linked (GlcNAc...) asparagine). Residues 1029–1049 form a helical membrane-spanning segment; that stretch reads ILLSFTVLICAVILVKFVSAL. An N-linked (GlcNAc...) asparagine glycan is attached at Asn-1394. 3 consecutive transmembrane segments (helical) span residues 1419-1439, 1452-1472, and 1480-1500; these read FVVL…VYLG, FPMI…IIFL, and IGWM…LPLY. N-linked (GlcNAc...) asparagine glycosylation is found at Asn-1584 and Asn-1652. A DEK-C domain is found at 1702-1758; that stretch reads GPDEGAITEAIRACLAEVDLDTVTKKQVRALVEQRLQTTLMGDKRTFLDRQIDHELA.

This sequence in the N-terminal section; belongs to the TRAFAC class myosin-kinesin ATPase superfamily. Myosin family. The protein in the C-terminal section; belongs to the chitin synthase family. Class V subfamily.

Its subcellular location is the cell membrane. It localises to the cell septum. It is found in the cell tip. The enzyme catalyses [(1-&gt;4)-N-acetyl-beta-D-glucosaminyl](n) + UDP-N-acetyl-alpha-D-glucosamine = [(1-&gt;4)-N-acetyl-beta-D-glucosaminyl](n+1) + UDP + H(+). In terms of biological role, polymerizes chitin, a structural polymer of the cell wall and septum, by transferring the sugar moiety of UDP-GlcNAc to the non-reducing end of the growing chitin polymer. Plays an important role in septal growth or maintenance. Mediates colony spore formation. The polypeptide is Chitin synthase csmB (Aspergillus niger (strain ATCC MYA-4892 / CBS 513.88 / FGSC A1513)).